A 350-amino-acid chain; its full sequence is Protein-glutamate methylesterase/protein-glutamine glutaminase 6 (350 aa).

In terms of domain architecture, Response regulatory spans 11-126; it reads RVLVVDDSAA…LAPVREELLE (116 aa). 4-aspartylphosphate is present on Asp62. Residues 150–347 form the CheB-type methylesterase domain; the sequence is ELEPARVAVV…ARLVEFARDA (198 aa). Catalysis depends on residues Ser162, His189, and Asp289.

Belongs to the CheB family. In terms of processing, phosphorylated by CheA. Phosphorylation of the N-terminal regulatory domain activates the methylesterase activity.

It localises to the cytoplasm. It catalyses the reaction [protein]-L-glutamate 5-O-methyl ester + H2O = L-glutamyl-[protein] + methanol + H(+). The enzyme catalyses L-glutaminyl-[protein] + H2O = L-glutamyl-[protein] + NH4(+). Functionally, involved in chemotaxis. Part of a chemotaxis signal transduction system that modulates chemotaxis in response to various stimuli. Catalyzes the demethylation of specific methylglutamate residues introduced into the chemoreceptors (methyl-accepting chemotaxis proteins or MCP) by CheR. Also mediates the irreversible deamidation of specific glutamine residues to glutamic acid. The sequence is that of Protein-glutamate methylesterase/protein-glutamine glutaminase 6 from Anaeromyxobacter dehalogenans (strain 2CP-C).